A 225-amino-acid chain; its full sequence is 3-dehydroquinate dehydratase (225 aa).

3-dehydroquinate-binding positions include S6, 30–32 (EWR), and R62. The Proton donor/acceptor role is filled by H118. K143 acts as the Schiff-base intermediate with substrate in catalysis. Positions 186, 205, and 209 each coordinate 3-dehydroquinate.

It belongs to the type-I 3-dehydroquinase family. As to quaternary structure, homodimer.

It carries out the reaction 3-dehydroquinate = 3-dehydroshikimate + H2O. Its pathway is metabolic intermediate biosynthesis; chorismate biosynthesis; chorismate from D-erythrose 4-phosphate and phosphoenolpyruvate: step 3/7. Its function is as follows. Involved in the third step of the chorismate pathway, which leads to the biosynthesis of aromatic amino acids. Catalyzes the cis-dehydration of 3-dehydroquinate (DHQ) and introduces the first double bond of the aromatic ring to yield 3-dehydroshikimate. The polypeptide is 3-dehydroquinate dehydratase (Streptococcus pneumoniae (strain Hungary19A-6)).